We begin with the raw amino-acid sequence, 746 residues long: Dystrobrevin alpha (746 aa).

An interaction with MAGEE1 region spans residues methionine 1 to glutamate 288. A ZZ-type zinc finger spans residues phenylalanine 238 to serine 294. The Zn(2+) site is built by cysteine 243, cysteine 246, cysteine 258, cysteine 261, cysteine 267, cysteine 270, histidine 280, and histidine 284. Residues aspartate 397–serine 447 are syntrophin-binding region. A coiled-coil region spans residues aspartate 458–glutamine 557. Disordered regions lie at residues leucine 555–isoleucine 577, glutamate 646–proline 667, and tyrosine 684–leucine 721. Residues serine 563–proline 576 are compositionally biased toward low complexity. Position 666 is a phosphoserine (serine 666).

The protein belongs to the dystrophin family. Dystrobrevin subfamily. Interacts with dystrophin, utrophin and the syntrophins SNTA1, SNTB1, SNTB2, SNTG1 and SNTG2. Binds dystrobrevin binding protein 1. Interacts with MAGEE1. Interacts with Ctnnal1. The interaction is required for correct localization of both Ctnnal1 and Dtna. In terms of assembly, does not interact with utrophin. As to quaternary structure, does not interact with syntrophin. Phosphorylation of isoform 2 on tyrosine kinase substrate domain present in the C-terminus. In terms of tissue distribution, expressed in skeletal muscle, heart, lung and brain. Sarcolemma and neuromuscular junction in skeletal muscle. Isoform 2 is restricted to the neuromuscular junction. Isoforms 5 and 6 are only expressed in muscle.

The protein resides in the cytoplasm. Its subcellular location is the synapse. It localises to the cell membrane. In terms of biological role, involved in synapse maturation and required for normal muscle function. The sequence is that of Dystrobrevin alpha (Dtna) from Mus musculus (Mouse).